Here is a 549-residue protein sequence, read N- to C-terminus: Arginine--tRNA ligase (549 aa).

Positions 122–132 (ANPTGFLHLGH) match the 'HIGH' region motif.

The protein belongs to the class-I aminoacyl-tRNA synthetase family. As to quaternary structure, monomer.

The protein localises to the cytoplasm. The catalysed reaction is tRNA(Arg) + L-arginine + ATP = L-arginyl-tRNA(Arg) + AMP + diphosphate. This is Arginine--tRNA ligase from Mycoplasmoides gallisepticum (strain R(low / passage 15 / clone 2)) (Mycoplasma gallisepticum).